The chain runs to 337 residues: Mitochondrial metalloendopeptidase OMA1 (337 aa).

Residues 1–68 lie on the Mitochondrial matrix side of the membrane; that stretch reads MFLNKYISNY…QPNPRDKRFQ (68 aa). A helical transmembrane segment spans residues 69-89; sequence WIFGALIAGGGVYYFTHLEYV. Residues 90–337 are Mitochondrial intermembrane-facing; it reads PISNRRRFND…MLQSFKEVHW (248 aa). Position 195 (His-195) interacts with Zn(2+). Glu-196 is an active-site residue. His-199 and Glu-250 together coordinate Zn(2+). An intrachain disulfide couples Cys-265 to Cys-321.

Belongs to the peptidase M48 family. It depends on Zn(2+) as a cofactor.

The protein localises to the mitochondrion inner membrane. Protease activity is induced in response to various mitochondrial stress. Protease that is part of the quality control system in the inner membrane of mitochondria. Cleaves and thereby promotes the turnover of mistranslated or misfolded membrane protein. In Schizosaccharomyces pombe (strain 972 / ATCC 24843) (Fission yeast), this protein is Mitochondrial metalloendopeptidase OMA1.